We begin with the raw amino-acid sequence, 204 residues long: Histone chaperone ASF1A (204 aa).

Residues 1–156 (MAKVQVNNVV…TRFHINWEDN (156 aa)) form an interaction with histone H3, CHAF1B, and HIRA region. A Required for interaction with HIRA motif is present at residues 31 to 37 (IEDLSED). The segment at 155 to 204 (DNTEKLEDAESSNPNLPSLLSTDALPSASKGWSTSENSLNVMLESHMDCM) is required for interaction with HIRA. At serine 192 the chain carries Phosphoserine; by TLK2.

This sequence belongs to the ASF1 family. In terms of assembly, interacts with histone H3 (via C-terminus), including histone H3.1, H3.2 and H3.3, and histone H4; the interaction with H3 is direct. Probably interacts with the heterodimeric form of H3-H4 taking the place of the second dimer. Interacts with the CHAF1A, CHAF1B and RBBP4 subunits of the CAF-1 complex. Interacts with CABIN1, HAT1, HIRA, NASP, TAF1 and UBN1. Found in a soluble complex with NASP and histones H3 and H4; the interaction with NASP is probably indirect and mediated by H3-H4. Interacts with CDAN1. Found in a cytosolic complex with IPO4 and histones H3 and H4. Interacts with CREBBP. In terms of processing, phosphorylated by TLK1 and TLK2. Highly phosphorylated in S-phase and at lower levels in M-phase. TLK2-mediated phosphorylation at Ser-192 prevents proteasome-dependent degradation.

It is found in the nucleus. Functionally, histone chaperone that facilitates histone deposition and histone exchange and removal during nucleosome assembly and disassembly. Cooperates with chromatin assembly factor 1 (CAF-1) to promote replication-dependent chromatin assembly and with HIRA to promote replication-independent chromatin assembly. Promotes homologous recombination-mediated repair of double-strand breaks (DSBs) at stalled or collapsed replication forks: acts by mediating histone replacement at DSBs, leading to recruitment of the MMS22L-TONSL complex and subsequent loading of RAD51. Also involved in the nuclear import of the histone H3-H4 dimer together with importin-4 (IPO4): specifically recognizes and binds newly synthesized histones with the monomethylation of H3 'Lys-9' and acetylation at 'Lys-14' (H3K9me1K14ac) marks, and diacetylation at 'Lys-5' and 'Lys-12' of H4 (H4K5K12ac) marks in the cytosol. Required for the formation of senescence-associated heterochromatin foci (SAHF) and efficient senescence-associated cell cycle exit. This Bos taurus (Bovine) protein is Histone chaperone ASF1A (ASF1A).